A 96-amino-acid chain; its full sequence is Large ribosomal subunit protein bL27 (96 aa).

The segment at 13–33 (KGGGSTANGRNSAGRRLGAKA) is disordered.

Belongs to the bacterial ribosomal protein bL27 family.

In Lactobacillus acidophilus (strain ATCC 700396 / NCK56 / N2 / NCFM), this protein is Large ribosomal subunit protein bL27.